A 215-amino-acid chain; its full sequence is Flagellin B1 (215 aa).

Positions 1-12 (MSVKNFMNNKKG) are excised as a propeptide.

Belongs to the archaeal flagellin family.

The protein resides in the archaeal flagellum. Its function is as follows. Flagellin is the subunit protein which polymerizes to form the filaments of archaeal flagella. In Methanococcus vannielii (strain ATCC 35089 / DSM 1224 / JCM 13029 / OCM 148 / SB), this protein is Flagellin B1 (flaB1).